A 343-amino-acid polypeptide reads, in one-letter code: Squamosa promoter-binding-like protein 11 (343 aa).

The segment at 1 to 48 is disordered; that stretch reads MECNPVSSTTSSSLLWDWDATASAEPPPPPGKRGGRDSSSASASAKRG. 2 stretches are compositionally biased toward low complexity: residues 7-19 and 37-48; these read SSTT…WDWD and DSSSASASAKRG. The SBP-type zinc-finger motif lies at 64-141; that stretch reads APRCQVEGCG…SDHNARRRKP (78 aa). Residues Cys-67, Cys-72, Cys-89, His-92, Cys-108, Cys-111, His-115, and Cys-127 each coordinate Zn(2+). A Bipartite nuclear localization signal motif is present at residues 124 to 140; that stretch reads KRSCRRRLSDHNARRRK.

Expressed in stems, leaf sheaths, and young panicles.

The protein localises to the nucleus. Its function is as follows. Trans-acting factor that binds specifically to the consensus nucleotide sequence 5'-TNCGTACAA-3'. May be involved in panicle development. The protein is Squamosa promoter-binding-like protein 11 (SPL11) of Oryza sativa subsp. japonica (Rice).